The chain runs to 885 residues: 3-hydroxy-3-methylglutaryl-coenzyme A reductase (885 aa).

The Cytoplasmic portion of the chain corresponds to 1-9 (MLSRLFRMH). A helical membrane pass occupies residues 10–39 (GLFVASHPWEVIVGTVTLTICMMSMNMFTG). Residues 40 to 56 (NDKICGWNYECPKFEED) lie on the Lumenal side of the membrane. The helical transmembrane segment at 57 to 78 (VLSSDIIILTITRCIAILYIYF) threads the bilayer. Residues 61 to 218 (DIIILTITRC…MTFFPACVSL (158 aa)) form the SSD domain. The INSIG-binding motif signature appears at 75-78 (YIYF). Over 79–89 (QFQNLRQLGSK) the chain is Cytoplasmic. Residue Lys-89 forms a Glycyl lysine isopeptide (Lys-Gly) (interchain with G-Cter in ubiquitin) linkage. A helical transmembrane segment spans residues 90–114 (YILGIAGLFTIFSSFVFSTVVIHFL). The Lumenal segment spans residues 115–123 (DKELTGLNE). The chain crosses the membrane as a helical span at residues 124 to 149 (ALPFFLLLIDLSRASALAKFALSSNS). The Cytoplasmic segment spans residues 150–159 (QDEVRENIAR). A helical transmembrane segment spans residues 160–187 (GMAILGPTFTLDALVECLVIGVGTMSGV). Residues 188–191 (RQLE) lie on the Lumenal side of the membrane. Residues 192 to 220 (IMCCFGCMSVLATYFVFMTFFPACVSLVL) traverse the membrane as a helical segment. The Cytoplasmic portion of the chain corresponds to 221 to 248 (ELSRESREGRPIWQLSHFARVLEGEENK). Lys-248 is covalently cross-linked (Glycyl lysine isopeptide (Lys-Gly) (interchain with G-Cter in ubiquitin)). A helical transmembrane segment spans residues 249–275 (PNPVTQRVKIIMSLGLVLVHAHSRWIA). Over 276–314 (DPSPQNSTADNSKVSLGLDENVSKRIEPSVSLWQFYLSK) the chain is Lumenal. 2 N-linked (GlcNAc...) asparagine glycosylation sites follow: Asn-281 and Asn-296. A helical membrane pass occupies residues 315-339 (MISMDIEQVITLTLALLLAVKYIFF). The Cytoplasmic portion of the chain corresponds to 340 to 885 (EQAETESTLS…LQGTCTKKAA (546 aa)). Catalysis depends on charge relay system residues Glu-558, Lys-688, and Asp-764. The Proton donor role is filled by His-863. Ser-869 is subject to Phosphoserine; by AMPK.

This sequence belongs to the HMG-CoA reductase family. As to quaternary structure, homotetramer. Homodimer. Interacts (via its SSD) with INSIG1; the interaction, accelerated by sterols, leads to the recruitment of HMGCR to AMFR/gp78 for its ubiquitination by the sterol-mediated ERAD pathway. Interacts with UBIAD1. Undergoes sterol-mediated ubiquitination and ER-associated degradation (ERAD). Accumulation of sterols in the endoplasmic reticulum (ER) membrane, triggers binding of the reductase to the ER membrane protein INSIG1 or INSIG2. The INSIG1 binding leads to the recruitment of the ubiquitin ligase, AMFR/gp78, RNF139 or RNF145, initiating ubiquitination of the reductase. The ubiquitinated reductase is then extracted from the ER membrane and delivered to cytosolic 26S proteosomes by a mechanism probably mediated by the ATPase Valosin-containing protein VCP/p97. The INSIG2-binding leads to the recruitment of the ubiquitin ligase RNF139, initiating ubiquitination of the reductase. Lys-248 is the main site of ubiquitination. Ubiquitination is enhanced by the presence of a geranylgeranylated protein. Post-translationally, N-glycosylated. Deglycosylated by NGLY1 on release from the endoplasmic reticulum (ER) in a sterol-mediated manner. In terms of processing, phosphorylated. Phosphorylation at Ser-869 reduces the catalytic activity. High expression found in liver, heart, kidney, bladder and subcutaneous fat. Lower levels in lung, uterus and large intestine. Lowest levels in cerebrum, spleen, spinal cord, stomach, ovary, longissimus muscle, and small intestine.

The protein localises to the endoplasmic reticulum membrane. It localises to the peroxisome membrane. It carries out the reaction (R)-mevalonate + 2 NADP(+) + CoA = (3S)-3-hydroxy-3-methylglutaryl-CoA + 2 NADPH + 2 H(+). The protein operates within metabolic intermediate biosynthesis; (R)-mevalonate biosynthesis; (R)-mevalonate from acetyl-CoA: step 3/3. With respect to regulation, regulated by a negative feedback mechanism through sterols and non-sterol metabolites derived from mevalonate. Phosphorylation at Ser-869 down-regulates the catalytic activity. Catalyzes the conversion of (3S)-hydroxy-3-methylglutaryl-CoA (HMG-CoA) to mevalonic acid, the rate-limiting step in the synthesis of cholesterol and other isoprenoids, thus plays a critical role in cellular cholesterol homeostasis. This Sus scrofa (Pig) protein is 3-hydroxy-3-methylglutaryl-coenzyme A reductase (HMGCR).